The sequence spans 327 residues: Inactive peptidyl-prolyl cis-trans isomerase FKBP6 (327 aa).

In terms of domain architecture, PPIase FKBP-type spans 54–143 (DASVLVKYSG…LFEIELLDFL (90 aa)). 3 TPR repeats span residues 171 to 204 (AATEREFGNYLFRQNRFYDAKVRYKRALLLLRRR), 219 to 252 (LPVLLNLSFTYLKLDRPTIALCYGEQALIIDQKN), and 253 to 286 (AKALFRCGQACLLLTEYQKARDFLVRAQKEQPFN).

The protein belongs to the FKBP6 family. In terms of assembly, interacts (via TPR repeats) with HSP90. Interacts with HSP72/HSPA2 and CLTC. Interacts with GAPDH; leading to inhibit GAPDH catalytic activity. Detected in all tissues examined, with higher expression in testis, heart, skeletal muscle, liver, and kidney.

It localises to the cytoplasm. The protein localises to the nucleus. Functionally, has an essential role in spermatogenesis. It is required to repress transposable elements and prevent their mobilization, which is essential for the germline integrity. Acts via the piRNA metabolic process, which mediates the repression of transposable elements during meiosis by forming complexes composed of piRNAs and Piwi proteins and govern the methylation and subsequent repression of transposons. Acts as a co-chaperone via its interaction with HSP90 and is required for the piRNA amplification process, the secondary piRNA biogenesis. May be required together with HSP90 in removal of 16 nucleotide ping-pong by-products from Piwi complexes, possibly facilitating turnover of Piwi complexes. This Homo sapiens (Human) protein is Inactive peptidyl-prolyl cis-trans isomerase FKBP6 (FKBP6).